A 693-amino-acid chain; its full sequence is Polyribonucleotide nucleotidyltransferase (693 aa).

2 residues coordinate Mg(2+): aspartate 486 and aspartate 492. The KH domain maps to 553–612 (PRFTTLKIHPDKIRDVIGKGGATIRALTEETGTSIDISDDGTVKIASVDKAAGDEARRRI). The 69-residue stretch at 622–690 (GRIYEGRVVK…KQGRIRLSMK (69 aa)) folds into the S1 motif domain.

It belongs to the polyribonucleotide nucleotidyltransferase family. In terms of assembly, component of the RNA degradosome, which is a multiprotein complex involved in RNA processing and mRNA degradation. Mg(2+) serves as cofactor.

The protein localises to the cytoplasm. The catalysed reaction is RNA(n+1) + phosphate = RNA(n) + a ribonucleoside 5'-diphosphate. Its function is as follows. Involved in mRNA degradation. Catalyzes the phosphorolysis of single-stranded polyribonucleotides processively in the 3'- to 5'-direction. The polypeptide is Polyribonucleotide nucleotidyltransferase (Thioalkalivibrio sulfidiphilus (strain HL-EbGR7)).